The following is a 204-amino-acid chain: Copper-binding protein CutI (204 aa).

An N-terminal signal peptide occupies residues 1-26 (MLKKIALTLCPAIVGSLLFFTAPASA). 2 residues coordinate Cu(2+): His-27 and Glu-50. Residues 27-178 (HVSVKPAESA…DDSENSGSSA (152 aa)) are Extracellular-facing. The segment at 146-176 (PHSITNITSAKQVTDEHGATKTEDDSENSGS) is disordered. The span at 147–157 (HSITNITSAKQ) shows a compositional bias: polar residues. Residues 158-168 (VTDEHGATKTE) are compositionally biased toward basic and acidic residues. Residues 179–199 (LDITAMVLSAAAIILSVAALV) traverse the membrane as a helical segment. The Cytoplasmic portion of the chain corresponds to 200 to 204 (KKKRA).

Its subcellular location is the cell membrane. Functionally, copper-binding protein that probably plays a role in copper homeostasis. May act as metallochaperone, possibly to facilitate copper uptake via the CutJ/YcnJ importer. Preferentially binds Cu in its oxidized Cu(II) state in a 1:1 stoichiometry. This Bacillus subtilis (strain 168) protein is Copper-binding protein CutI.